Consider the following 100-residue polypeptide: Urease subunit gamma (100 aa).

It belongs to the urease gamma subunit family. In terms of assembly, heterotrimer of UreA (gamma), UreB (beta) and UreC (alpha) subunits. Three heterotrimers associate to form the active enzyme.

It localises to the cytoplasm. The enzyme catalyses urea + 2 H2O + H(+) = hydrogencarbonate + 2 NH4(+). The protein operates within nitrogen metabolism; urea degradation; CO(2) and NH(3) from urea (urease route): step 1/1. The chain is Urease subunit gamma from Yersinia rohdei.